A 96-amino-acid chain; its full sequence is Large ribosomal subunit protein bL28 (96 aa).

The disordered stretch occupies residues 1-24 (MSRSCELTGKGVQSGHNVSHANNK).

This sequence belongs to the bacterial ribosomal protein bL28 family.

The chain is Large ribosomal subunit protein bL28 from Sinorhizobium fredii (strain NBRC 101917 / NGR234).